Here is a 338-residue protein sequence, read N- to C-terminus: DNA-directed RNA polymerase subunit alpha (338 aa).

The alpha N-terminal domain (alpha-NTD) stretch occupies residues M1 to N225. The alpha C-terminal domain (alpha-CTD) stretch occupies residues Y242–E338. The segment at F314–E338 is disordered.

It belongs to the RNA polymerase alpha chain family. As to quaternary structure, homodimer. The RNAP catalytic core consists of 2 alpha, 1 beta, 1 beta' and 1 omega subunit. When a sigma factor is associated with the core the holoenzyme is formed, which can initiate transcription.

It carries out the reaction RNA(n) + a ribonucleoside 5'-triphosphate = RNA(n+1) + diphosphate. In terms of biological role, DNA-dependent RNA polymerase catalyzes the transcription of DNA into RNA using the four ribonucleoside triphosphates as substrates. This is DNA-directed RNA polymerase subunit alpha from Corynebacterium efficiens (strain DSM 44549 / YS-314 / AJ 12310 / JCM 11189 / NBRC 100395).